A 499-amino-acid polypeptide reads, in one-letter code: Tektin-like protein 1 (499 aa).

2 coiled-coil regions span residues 197–227 (SMLT…LKTL) and 297–317 (LNEA…MAKN). Y372 carries the phosphotyrosine modification.

As to quaternary structure, microtubule inner protein component of sperm flagellar doublet microtubules.

The protein localises to the cytoplasm. The protein resides in the cytoskeleton. It localises to the flagellum axoneme. Microtubule inner protein (MIP) part of the dynein-decorated doublet microtubules (DMTs) in sperm flagellar axoneme, which is required for motile flagellum beating. Forms an extensive interaction network cross-linking the lumen of axonemal doublet microtubules. This is Tektin-like protein 1 from Homo sapiens (Human).